The chain runs to 275 residues: Voltage-dependent calcium channel gamma-5 subunit (275 aa).

Helical transmembrane passes span 8-28 (ALTL…GIAV), 103-123 (FPLV…IGHI), 129-149 (ILAF…VVGL), and 181-201 (FAAI…YLFM).

The protein belongs to the PMP-22/EMP/MP20 family. CACNG subfamily. As to quaternary structure, the L-type calcium channel is composed of five subunits: alpha-1, alpha-2/delta, beta and gamma. Acts as an auxiliary subunit for AMPA-selective glutamate receptors (AMPARs). Found in a complex with GRIA1, GRIA2, GRIA3, GRIA4, CNIH2, CNIH3, CACNG2, CACNG3, CACNG4, CACNG7 and CACNG8. Interacts with GRIA1, GRIA2, GRIA3 and GRIA4.

It localises to the membrane. Its subcellular location is the postsynaptic density membrane. Regulates the gating properties of AMPA-selective glutamate receptors (AMPARs). Modulates their gating properties by accelerating their rates of activation, deactivation and desensitization. Displays subunit-specific AMPA receptor regulation. Shows specificity for GRIA1, GRIA4 and the long isoform of GRIA2. According to PubMed:18817736, shows only specificity for GRIA2 and specifically to the form of GRIA2 for which a single amino acid in the pore region has been edited from a glutamine to an arginine residue. Thought to stabilize the calcium channel in an inactivated (closed) state. The protein is Voltage-dependent calcium channel gamma-5 subunit (Cacng5) of Rattus norvegicus (Rat).